Reading from the N-terminus, the 272-residue chain is Indole-3-glycerol phosphate synthase (272 aa).

The protein belongs to the TrpC family.

The enzyme catalyses 1-(2-carboxyphenylamino)-1-deoxy-D-ribulose 5-phosphate + H(+) = (1S,2R)-1-C-(indol-3-yl)glycerol 3-phosphate + CO2 + H2O. It participates in amino-acid biosynthesis; L-tryptophan biosynthesis; L-tryptophan from chorismate: step 4/5. The protein is Indole-3-glycerol phosphate synthase of Mycolicibacterium vanbaalenii (strain DSM 7251 / JCM 13017 / BCRC 16820 / KCTC 9966 / NRRL B-24157 / PYR-1) (Mycobacterium vanbaalenii).